The chain runs to 84 residues: Large ribosomal subunit protein bL31B (84 aa).

Belongs to the bacterial ribosomal protein bL31 family. Type B subfamily. As to quaternary structure, part of the 50S ribosomal subunit.

The chain is Large ribosomal subunit protein bL31B from Alkalilimnicola ehrlichii (strain ATCC BAA-1101 / DSM 17681 / MLHE-1).